The sequence spans 967 residues: Glutamate receptor 2.6 (967 aa).

The N-terminal stretch at M1–Q31 is a signal peptide. Residues E32–E590 lie on the Extracellular side of the membrane. N45, N57, N121, N336, N345, N424, and N550 each carry an N-linked (GlcNAc...) asparagine glycan. Residues L591 to Y611 form a helical membrane-spanning segment. The Cytoplasmic portion of the chain corresponds to Q612 to S621. The helical transmembrane segment at I622–M642 threads the bilayer. The Cytoplasmic segment spans residues R643–R651. The chain crosses the membrane as a helical span at residues V652–L672. The Extracellular segment spans residues T673 to S832. N795 carries an N-linked (GlcNAc...) asparagine glycan. The helical transmembrane segment at F833–V853 threads the bilayer. Over C854–A967 the chain is Cytoplasmic. The segment covering G864–D874 has biased composition (polar residues). Residues G864–D913 are disordered.

The protein belongs to the glutamate-gated ion channel (TC 1.A.10.1) family. In terms of assembly, may form heteromers. In terms of tissue distribution, expressed predominantly in roots.

The protein resides in the membrane. In terms of biological role, glutamate-gated receptor that probably acts as a non-selective cation channel. May be involved in light-signal transduction and calcium homeostasis via the regulation of calcium influx into cells. The polypeptide is Glutamate receptor 2.6 (GLR2.6) (Arabidopsis thaliana (Mouse-ear cress)).